A 31-amino-acid chain; its full sequence is Cyclotide cter-R (31 aa).

A cross-link (cyclopeptide (Gly-Asn)) is located at residues 1–31 (GIPCGESCVFIPCTVTALLGCSCKDKVCYKN). 3 disulfide bridges follow: C4-C21, C8-C23, and C13-C28.

In terms of processing, this is a cyclic peptide.

It is found in the secreted. Its function is as follows. Probably participates in a plant defense mechanism. The sequence is that of Cyclotide cter-R from Clitoria ternatea (Butterfly pea).